The following is a 435-amino-acid chain: UDP-glucuronic acid decarboxylase 1 (435 aa).

The disordered stretch occupies residues 1–33; sequence MKQLHKQMSSKRDEETIPMSQSSPYSPKTLKHP. Over 1 to 48 the chain is Cytoplasmic; it reads MKQLHKQMSSKRDEETIPMSQSSPYSPKTLKHPRSLPRSLHYLFREQR. A helical; Signal-anchor for type II membrane protein transmembrane segment spans residues 49-69; it reads LLFILVGILIGSTFFILQPSL. The Lumenal portion of the chain corresponds to 70 to 435; it reads SRLGAAESTS…ILNEDEGKGL (366 aa). Positions 91-100 are enriched in polar residues; it reads DSPPSRSTFN. Positions 91-110 are disordered; it reads DSPPSRSTFNSGGGGGRTGR. NAD(+) is bound by residues Gly-129, Phe-130, Val-131, Asp-150, Asn-151, Phe-153, Thr-154, Gly-155, Asp-175, and Val-176. Ile-180 provides a ligand contact to UDP-alpha-D-glucuronate. Leu-190 contacts NAD(+). Residue Lys-208 participates in UDP-alpha-D-glucuronate binding. An NAD(+)-binding site is contributed by Thr-209. Positions 216, 219, 222, and 223 each coordinate UDP-alpha-D-glucuronate. Tyr-262 and Lys-266 together coordinate NAD(+). Catalysis depends on Tyr-262, which acts as the Proton acceptor. UDP-alpha-D-glucuronate is bound at residue Tyr-276. Positions 292 and 303 each coordinate NAD(+). A disordered region spans residues 380–401; sequence EFKPNTADDPHKRKPDISKAKE. Residues 385–401 show a composition bias toward basic and acidic residues; sequence TADDPHKRKPDISKAKE.

This sequence belongs to the NAD(P)-dependent epimerase/dehydratase family. UDP-glucuronic acid decarboxylase subfamily. The cofactor is NAD(+). As to expression, ubiquitous.

The protein resides in the golgi apparatus. It localises to the golgi stack membrane. The enzyme catalyses UDP-alpha-D-glucuronate + H(+) = UDP-alpha-D-xylose + CO2. It participates in nucleotide-sugar biosynthesis; UDP-alpha-D-xylose biosynthesis; UDP-alpha-D-xylose from UDP-alpha-D-glucuronate: step 1/1. In terms of biological role, catalyzes the NAD-dependent decarboxylation of UDP-glucuronic acid to UDP-xylose. Necessary for the biosynthesis of the core tetrasaccharide in glycosaminoglycan biosynthesis. The chain is UDP-glucuronic acid decarboxylase 1 from Arabidopsis thaliana (Mouse-ear cress).